An 890-amino-acid polypeptide reads, in one-letter code: Serine/threonine-protein kinase D3 (890 aa).

Phosphoserine is present on residues Ser6, Ser27, Ser37, Ser41, and Ser44. Residues 154–204 (PHTLYVHSYKAPTFCDYCGEMLWGLVRQGLKCEGCGLNYHKRCAFKIPNNC) form a Phorbol-ester/DAG-type 1 zinc finger. Ser213 and Ser216 each carry phosphoserine. The Phorbol-ester/DAG-type 2 zinc-finger motif lies at 271–321 (PHTFAVHSYTRPTICQYCKRLLKGLFRQGMQCKDCKFNCHKRCASKVPRDC). The tract at residues 332–371 (SSLGTDTDIPMDIDNNDINSDSSRGLDDTEEPSPPEDKMF) is disordered. A phosphoserine mark is found at Ser364, Ser391, and Ser395. One can recognise a PH domain in the interval 416-532 (TMVKEGWMVH…WEKAIRQALM (117 aa)). Phosphotyrosine is present on Tyr426. Ser442 is subject to Phosphoserine. Tyr457 is subject to Phosphotyrosine. Thr535 carries the post-translational modification Phosphothreonine. Ser539 is modified (phosphoserine). Positions 576–832 (IFADEVLGSG…VDKSLSHPWL (257 aa)) constitute a Protein kinase domain. ATP-binding positions include 582–590 (LGSGQFGIV) and Lys605. Asp699 (proton acceptor) is an active-site residue. A Phosphoserine; by PKC modification is found at Ser731. Ser735 is modified (phosphoserine; by autocatalysis). Residue Tyr742 is modified to Phosphotyrosine.

This sequence belongs to the protein kinase superfamily. CAMK Ser/Thr protein kinase family. PKD subfamily. Mg(2+) is required as a cofactor. In terms of tissue distribution, ubiquitous.

The protein resides in the cytoplasm. The protein localises to the membrane. It carries out the reaction L-seryl-[protein] + ATP = O-phospho-L-seryl-[protein] + ADP + H(+). The catalysed reaction is L-threonyl-[protein] + ATP = O-phospho-L-threonyl-[protein] + ADP + H(+). With respect to regulation, activated by DAG and phorbol esters. Phorbol-ester/DAG-type domains 1 and 2 bind both DAG and phorbol ester with high affinity and mediate translocation to the cell membrane. Autophosphorylation of Ser-735 and phosphorylation of Ser-731 by PKC relieves auto-inhibition by the PH domain. In terms of biological role, converts transient diacylglycerol (DAG) signals into prolonged physiological effects, downstream of PKC. Involved in resistance to oxidative stress. This is Serine/threonine-protein kinase D3 (PRKD3) from Homo sapiens (Human).